Consider the following 202-residue polypeptide: uncharacterized protein (202 aa).

The HTH tetR-type domain maps to 14–74 (NAKTERILDV…AMADRYFQRC (61 aa)).

This is an uncharacterized protein from Xanthobacter autotrophicus.